Here is a 246-residue protein sequence, read N- to C-terminus: tRNA (cytidine/uridine-2'-O-)-methyltransferase TrmJ (246 aa).

Residues 79–81, glycine 114, isoleucine 134, and 141–143 each bind S-adenosyl-L-methionine; these read TSA and SSL.

This sequence belongs to the class IV-like SAM-binding methyltransferase superfamily. RNA methyltransferase TrmH family. Homodimer.

The protein localises to the cytoplasm. The enzyme catalyses cytidine(32) in tRNA + S-adenosyl-L-methionine = 2'-O-methylcytidine(32) in tRNA + S-adenosyl-L-homocysteine + H(+). It catalyses the reaction uridine(32) in tRNA + S-adenosyl-L-methionine = 2'-O-methyluridine(32) in tRNA + S-adenosyl-L-homocysteine + H(+). Its function is as follows. Catalyzes the formation of 2'O-methylated cytidine (Cm32) or 2'O-methylated uridine (Um32) at position 32 in tRNA. This is tRNA (cytidine/uridine-2'-O-)-methyltransferase TrmJ (trmJ) from Escherichia coli O1:K1 / APEC.